Reading from the N-terminus, the 617-residue chain is Neurosecretory protein VGF (617 aa).

A signal peptide spans 1–23 (MKTFTLPASVLFCFLLLIRGLGA). Disordered stretches follow at residues 29-75 (SDVY…GELF), 94-113 (PASPPAVPAGSQQGTPEEAA), 121-157 (VRSQTHSLPASEIQASAVAPPRPQTQDNDPEADDRSE), and 169-192 (LRDFSPSNAKRQQETAAAETETRT). The segment covering 48–64 (AVSRPKDDSVPEVRAAR) has biased composition (basic and acidic residues). Positions 148 to 157 (NDPEADDRSE) are enriched in acidic residues. The residue at position 180 (Gln-180) is a Pyrrolidone carboxylic acid. The segment covering 182–192 (ETAAAETETRT) has biased composition (low complexity). Gln-313 carries the post-translational modification Pyrrolidone carboxylic acid. Residues 348-603 (DLGGRGLQET…AEERRLQEQE (256 aa)) form a disordered region. The segment covering 378–397 (EDEVGEEDEEAAEAEAEAEE) has biased composition (acidic residues). Residues 418–436 (AEDKRSQEEAPGHRRKDAE) are compositionally biased toward basic and acidic residues. Position 423 is a phosphoserine (Ser-423). The segment covering 437–452 (GTEEGGEEDDDDEEMD) has biased composition (acidic residues). Pro residues predominate over residues 491 to 501 (PPEPVPPPRAA). Basic and acidic residues predominate over residues 577–601 (HHPDLEAQARRAQEEADAEERRLQE).

Interacts with HSPA8 on cell membrane. Interacts with C3AR1. Interacts with C1QBP. Post-translationally, multiple peptides are derived from VGF, with activities in synaptic plasticity, antidepression, penile erection, autonomic activation, and increases in energy expenditure. Central and peripheral nervous systems, synthesized exclusively in neuronal and neuroendocrine cells. VGF and several of the derived peptides are present in the brain.

The protein resides in the secreted. Its subcellular location is the cytoplasmic vesicle. The protein localises to the secretory vesicle. In terms of biological role, secreted polyprotein that is packaged and proteolytically processed by prohormone convertases PCSK1 and PCSK2 in a cell-type-specific manner. VGF and peptides derived from its processing play many roles in neurogenesis and neuroplasticity associated with learning, memory, depression and chronic pain. Functionally, plays a role in the control of body fluid homeostasis by regulating vasopressin release. Suppresses presynaptic glutamatergic neurons connected to vasopressin neurons. Its function is as follows. Plays a role in the control of body fluid homeostasis by regulating vasopressin release. Activates GABAergic interneurons which are inhibitory neurons of the nervous system and thereby suppresses presynaptic glutamatergic neurons. Also stimulates feeding behavior in an orexin-dependent manner in the hypothalamus. Functions as a positive regulator for the activation of orexin neurons resulting in elevated gastric acid secretion and gastric emptying. Secreted multifunctional neuropeptide that binds to different cell receptors and thereby plays multiple physiological roles including modulation of energy expenditure, pain, response to stress, gastric regulation, glucose homeostasis as well as lipolysis. Activates the G-protein-coupled receptor C3AR1 via a folding-upon-binding mechanism leading to enhanced lipolysis in adipocytes. Interacts with C1QBP receptor in macrophages and microglia causing increased levels of intracellular calcium and hypersensitivity. In terms of biological role, plays a role in the regulation of memory formation and depression-related behaviors potentially by influencing synaptic plasticity and neurogenesis. Induces acute and transient activation of the NTRK2/TRKB receptor and subsequent CREB phosphorylation. Also induces insulin secretion in insulinoma cells by increasing intracellular calcium mobilization. This is Neurosecretory protein VGF (Vgf) from Rattus norvegicus (Rat).